Reading from the N-terminus, the 356-residue chain is Histidinol-phosphate aminotransferase 2 (356 aa).

The residue at position 213 (K213) is an N6-(pyridoxal phosphate)lysine.

It belongs to the class-II pyridoxal-phosphate-dependent aminotransferase family. Histidinol-phosphate aminotransferase subfamily. Homodimer. Pyridoxal 5'-phosphate serves as cofactor.

The enzyme catalyses L-histidinol phosphate + 2-oxoglutarate = 3-(imidazol-4-yl)-2-oxopropyl phosphate + L-glutamate. It participates in amino-acid biosynthesis; L-histidine biosynthesis; L-histidine from 5-phospho-alpha-D-ribose 1-diphosphate: step 7/9. This chain is Histidinol-phosphate aminotransferase 2, found in Burkholderia mallei (strain ATCC 23344).